Here is a 399-residue protein sequence, read N- to C-terminus: Beta-1,6-galactosyltransferase GALT31A (399 aa).

Topologically, residues 1-12 (MGMGRYQKSATS) are cytoplasmic. A helical; Signal-anchor for type II membrane protein membrane pass occupies residues 13–35 (GVSARWVFVLCISSFLLGVLVVN). Residues 36–399 (RLLASFETVD…GDGAIWHSSF (364 aa)) lie on the Lumenal side of the membrane.

It belongs to the glycosyltransferase 31 family. Interacts with GALT29A. Mn(2+) is required as a cofactor.

The protein resides in the golgi apparatus membrane. The protein operates within protein modification; protein glycosylation. Beta-galactosyltransferase involved in elongation of beta-1,6-linked galactan side chains on arabinogalactan proteins. Required for the progression of embryogenesis beyond the globular stage. Beta-galactosyltransferase involved in the biosynthesis of type II arabinogalactan. Transfers galactose from UDP-galactose to a mixture of various oligosaccharides derived from arabinogalactan proteins. Forms a complex with GALT29A that can work cooperatively to enhance the activities of adding galactose residues at O6 positions to beta-1,6-linked galactan and beta-1,3-linked galactan. The protein is Beta-1,6-galactosyltransferase GALT31A of Arabidopsis thaliana (Mouse-ear cress).